Here is a 430-residue protein sequence, read N- to C-terminus: Adenylosuccinate synthetase (430 aa).

Residues G12–K18 and G40–T42 contribute to the GTP site. The Proton acceptor role is filled by D13. Mg(2+) contacts are provided by D13 and G40. Residues D13–K16, N38–H41, T130, R144, Q224, T239, and R303 each bind IMP. H41 acts as the Proton donor in catalysis. T299–R305 contacts substrate. GTP-binding positions include R305, K331–D333, and S413–S415.

This sequence belongs to the adenylosuccinate synthetase family. As to quaternary structure, homodimer. Mg(2+) is required as a cofactor.

Its subcellular location is the cytoplasm. The enzyme catalyses IMP + L-aspartate + GTP = N(6)-(1,2-dicarboxyethyl)-AMP + GDP + phosphate + 2 H(+). It participates in purine metabolism; AMP biosynthesis via de novo pathway; AMP from IMP: step 1/2. Plays an important role in the de novo pathway of purine nucleotide biosynthesis. Catalyzes the first committed step in the biosynthesis of AMP from IMP. The polypeptide is Adenylosuccinate synthetase (Ruegeria pomeroyi (strain ATCC 700808 / DSM 15171 / DSS-3) (Silicibacter pomeroyi)).